A 644-amino-acid polypeptide reads, in one-letter code: Transcription factor cep-1 (644 aa).

The DNA-binding element occupies 223 to 418; the sequence is EKWMEIDVLK…NFCEREDAKQ (196 aa). 4 residues coordinate Zn(2+): C307, H310, C361, and C365. The required for tertiary structure stability of the protein stretch occupies residues 528-555; the sequence is TNYSFRTLTLSTAEYTKVVEFLAREAKV.

Belongs to the p53 family. In terms of assembly, homodimer. Interacts (via C-terminus domain) with prmt-5; not methylated by prmt-5. Interacts with cbp-1 (via HAT domain); cep-1 transcriptional activity may be inhibited by interaction with methylated cbp-1. Component of a complex that contains prmt-5 and cbp-1. Interacts with ape-1; the interaction inhibits pro-apoptotic activity of cep-1. Zn(2+) serves as cofactor. Phosphorylated in response to IR-induced DNA damage which is thought to be mediated by akt-1. Expressed in pharyngeal muscle and neurons.

It is found in the nucleus. In terms of biological role, transcriptional activator that binds the same DNA consensus sequence as p53. Has a role in normal development to ensure proper meiotic chromosome segregation. Promotes apoptosis under conditions of cellular and genotoxic stress in response to DNA damage, hypoxia, or starvation. Regulates germline apoptosis in response to DNA damage. Its pro-apoptotic activity is inhibited when bound to ape-1 in vitro. Plays a role in cell cycle arrest in the germline in response to DNA damage by UV-C light. However, not required for survival in response to DNA damage induced by UV-C light, indicating that it is unlikely to be involved in DNA repair. Required for induction of ced-13 in response to DNA damage. Regulates DNA damage-induced apoptosis by inducing transcription of the programmed cell death activator egl-1. Regulates germline proliferation by activating phg-1. Modulates lifespan. The sequence is that of Transcription factor cep-1 from Caenorhabditis elegans.